We begin with the raw amino-acid sequence, 449 residues long: Asparagine--tRNA ligase (449 aa).

Belongs to the class-II aminoacyl-tRNA synthetase family. Homodimer.

It is found in the cytoplasm. It catalyses the reaction tRNA(Asn) + L-asparagine + ATP = L-asparaginyl-tRNA(Asn) + AMP + diphosphate + H(+). The sequence is that of Asparagine--tRNA ligase from Mesomycoplasma hyopneumoniae (strain 7448) (Mycoplasma hyopneumoniae).